We begin with the raw amino-acid sequence, 363 residues long: 3-dehydroquinate synthase (363 aa).

NAD(+)-binding positions include 107-111 (GVIGD), 131-132 (TT), Lys-144, and Lys-153. Zn(2+) is bound by residues Glu-186, His-251, and His-268.

The protein belongs to the sugar phosphate cyclases superfamily. Dehydroquinate synthase family. The cofactor is NAD(+). Co(2+) is required as a cofactor. Zn(2+) serves as cofactor.

The protein resides in the cytoplasm. The enzyme catalyses 7-phospho-2-dehydro-3-deoxy-D-arabino-heptonate = 3-dehydroquinate + phosphate. The protein operates within metabolic intermediate biosynthesis; chorismate biosynthesis; chorismate from D-erythrose 4-phosphate and phosphoenolpyruvate: step 2/7. Its function is as follows. Catalyzes the conversion of 3-deoxy-D-arabino-heptulosonate 7-phosphate (DAHP) to dehydroquinate (DHQ). This is 3-dehydroquinate synthase from Nostoc sp. (strain PCC 7120 / SAG 25.82 / UTEX 2576).